We begin with the raw amino-acid sequence, 179 residues long: Ribosome-recycling factor (179 aa).

This sequence belongs to the RRF family.

The protein localises to the cytoplasm. Its function is as follows. Responsible for the release of ribosomes from messenger RNA at the termination of protein biosynthesis. May increase the efficiency of translation by recycling ribosomes from one round of translation to another. The chain is Ribosome-recycling factor from Chlamydia trachomatis serovar L2b (strain UCH-1/proctitis).